A 73-amino-acid chain; its full sequence is UPF0499 protein CHGG_06021 (73 aa).

The signal sequence occupies residues 1–20 (MKSSIHVVLFFLLSLVASMA). Disulfide bonds link cysteine 41/cysteine 55, cysteine 48/cysteine 60, and cysteine 54/cysteine 69.

The protein belongs to the UPF0499 family.

The protein localises to the secreted. The sequence is that of UPF0499 protein CHGG_06021 from Chaetomium globosum (strain ATCC 6205 / CBS 148.51 / DSM 1962 / NBRC 6347 / NRRL 1970) (Soil fungus).